The primary structure comprises 226 residues: Endonuclease V (226 aa).

Asp43 and Asp108 together coordinate Mg(2+).

It belongs to the endonuclease V family. Mg(2+) serves as cofactor.

It localises to the cytoplasm. It carries out the reaction Endonucleolytic cleavage at apurinic or apyrimidinic sites to products with a 5'-phosphate.. In terms of biological role, DNA repair enzyme involved in the repair of deaminated bases. Selectively cleaves double-stranded DNA at the second phosphodiester bond 3' to a deoxyinosine leaving behind the intact lesion on the nicked DNA. The polypeptide is Endonuclease V (Thermosipho melanesiensis (strain DSM 12029 / CIP 104789 / BI429)).